Here is a 388-residue protein sequence, read N- to C-terminus: Pepsin F (388 aa).

Residues 1–15 (MKWLGLLGLVALSEC) form the signal peptide. Residues 16 to 58 (LVTIPLMKVKSMRENLRENDILLDYLEKHPYRPTYKLLSGQQD) constitute a propeptide, activation peptide. In terms of domain architecture, Peptidase A1 spans 74 to 385 (YIGIISIGTP…DRANNRIGLA (312 aa)). Asp-92 is a catalytic residue. Intrachain disulfides connect Cys-105/Cys-110 and Cys-266/Cys-270. Asp-275 is a catalytic residue. Cys-309 and Cys-343 are oxidised to a cystine.

Belongs to the peptidase A1 family.

It is found in the secreted. The enzyme catalyses Preferential cleavage: hydrophobic, preferably aromatic, residues in P1 and P1' positions. Cleaves 1-Phe-|-Val-2, 4-Gln-|-His-5, 13-Glu-|-Ala-14, 14-Ala-|-Leu-15, 15-Leu-|-Tyr-16, 16-Tyr-|-Leu-17, 23-Gly-|-Phe-24, 24-Phe-|-Phe-25 and 25-Phe-|-Tyr-26 bonds in the B chain of insulin.. Its function is as follows. Shows particularly broad specificity; although bonds involving phenylalanine and leucine are preferred, many others are also cleaved to some extent. The sequence is that of Pepsin F from Oryctolagus cuniculus (Rabbit).